Reading from the N-terminus, the 313-residue chain is MNKFSSVWVFSDTPSRLPELMSGAQAVGEKVNAFVLNEADSATACHLGADHVWLLSGKPEDRMIEDYAAAMAETIRQHSEGGAVLLPNTRRGKLLAAKLGYRLSAAVSNDASDVSLQDGKAAVKHMVYGGLAIGAETIASPFAVITLSSGTFDAQQPDASRSGEMHTVQWQAPATAVTRTATQARQSNSVDLDKARLVVSVGRGIGSKENISLAEALCQTIGAELACSRPVAENEKWMEHERYVGISNLMLKPELYLAVGISGQIQHMVGANGAQTIFAINKDKNAPIFQYADFGIVGDALKILPALTAALAR.

255–283 (LYLAVGISGQIQHMVGANGAQTIFAINKD) is a binding site for FAD.

The protein belongs to the ETF alpha-subunit/FixB family. Heterodimer of FixA and FixB.

It functions in the pathway amine and polyamine metabolism; carnitine metabolism. Required for anaerobic carnitine reduction. May bring reductant to CaiA. This chain is Protein FixB, found in Salmonella agona (strain SL483).